Reading from the N-terminus, the 245-residue chain is tRNA (guanine-N(1)-)-methyltransferase (245 aa).

Residues Gly-111 and 131-136 (MGDYVL) contribute to the S-adenosyl-L-methionine site.

It belongs to the RNA methyltransferase TrmD family. Homodimer.

It is found in the cytoplasm. It catalyses the reaction guanosine(37) in tRNA + S-adenosyl-L-methionine = N(1)-methylguanosine(37) in tRNA + S-adenosyl-L-homocysteine + H(+). In terms of biological role, specifically methylates guanosine-37 in various tRNAs. This Staphylococcus aureus (strain Mu3 / ATCC 700698) protein is tRNA (guanine-N(1)-)-methyltransferase.